The primary structure comprises 325 residues: MRLPTLFMLAAIATASPMSDLNRREMTRRQAAESCPIGYCTQNGGTTGGTAGDTVTVTDLAGLTEAAENETPLTIIVSGAISGSAKIRVASDKTIYGETGSSITGVGFYIRRVSNVIMRNLKIGQVDADNGDAIGIDESTNVWVDHCDLSGDLSAGKDDLDGLLDITHGAEWITVSNTYFHDHWKGSLIGHSDSNEGEDLGHLHITYANNYWYNVNSRTPSIRFGTVHIINNYWDNLLLTGVNCRMDAQVLVQSSAFSNCPDEAIFFADSDYTGYAVVDDVDLGGSTNSVPEGTLTPSSLPYDAIEAIGSAQIATTIPGTAGQKL.

A signal peptide spans 1–15 (MRLPTLFMLAAIATA). Positions 132, 161, and 165 each coordinate Ca(2+). Residue Arg-218 is part of the active site.

This sequence belongs to the polysaccharide lyase 1 family. The cofactor is Ca(2+).

The protein localises to the secreted. The enzyme catalyses Eliminative cleavage of (1-&gt;4)-alpha-D-galacturonan to give oligosaccharides with 4-deoxy-alpha-D-galact-4-enuronosyl groups at their non-reducing ends.. Pectinolytic enzyme consist of four classes of enzymes: pectin lyase, polygalacturonase, pectin methylesterase and rhamnogalacturonase. Among pectinolytic enzymes, pectin lyase is the most important in depolymerization of pectin, since it cleaves internal glycosidic bonds of highly methylated pectins. Favors pectate, the anion, over pectin, the methyl ester. This is Probable pectate lyase B (plyB) from Aspergillus terreus (strain NIH 2624 / FGSC A1156).